We begin with the raw amino-acid sequence, 466 residues long: 3-isopropylmalate dehydratase large subunit (466 aa).

Residues Cys347, Cys407, and Cys410 each contribute to the [4Fe-4S] cluster site.

Belongs to the aconitase/IPM isomerase family. LeuC type 1 subfamily. In terms of assembly, heterodimer of LeuC and LeuD. It depends on [4Fe-4S] cluster as a cofactor.

The catalysed reaction is (2R,3S)-3-isopropylmalate = (2S)-2-isopropylmalate. It participates in amino-acid biosynthesis; L-leucine biosynthesis; L-leucine from 3-methyl-2-oxobutanoate: step 2/4. Catalyzes the isomerization between 2-isopropylmalate and 3-isopropylmalate, via the formation of 2-isopropylmaleate. The sequence is that of 3-isopropylmalate dehydratase large subunit from Shigella sonnei (strain Ss046).